The chain runs to 475 residues: Ribulose bisphosphate carboxylase large chain (475 aa).

A propeptide spanning residues 1–2 (MS) is cleaved from the precursor. Pro3 carries the post-translational modification N-acetylproline. Residue Lys14 is modified to N6,N6,N6-trimethyllysine. Substrate contacts are provided by Asn123 and Thr173. Lys175 (proton acceptor) is an active-site residue. Position 177 (Lys177) interacts with substrate. Residues Lys201, Asp203, and Glu204 each contribute to the Mg(2+) site. The residue at position 201 (Lys201) is an N6-carboxylysine. The active-site Proton acceptor is His294. Substrate contacts are provided by Arg295, His327, and Ser379.

This sequence belongs to the RuBisCO large chain family. Type I subfamily. Heterohexadecamer of 8 large chains and 8 small chains; disulfide-linked. The disulfide link is formed within the large subunit homodimers. It depends on Mg(2+) as a cofactor. In terms of processing, the disulfide bond which can form in the large chain dimeric partners within the hexadecamer appears to be associated with oxidative stress and protein turnover.

The protein resides in the plastid. Its subcellular location is the chloroplast. The enzyme catalyses 2 (2R)-3-phosphoglycerate + 2 H(+) = D-ribulose 1,5-bisphosphate + CO2 + H2O. It catalyses the reaction D-ribulose 1,5-bisphosphate + O2 = 2-phosphoglycolate + (2R)-3-phosphoglycerate + 2 H(+). Functionally, ruBisCO catalyzes two reactions: the carboxylation of D-ribulose 1,5-bisphosphate, the primary event in carbon dioxide fixation, as well as the oxidative fragmentation of the pentose substrate in the photorespiration process. Both reactions occur simultaneously and in competition at the same active site. The polypeptide is Ribulose bisphosphate carboxylase large chain (Clarkia xantiana (Gunsight clarkia)).